The following is a 71-amino-acid chain: Conotoxin Tx11.3 (71 aa).

Residues 1 to 19 form the signal peptide; that stretch reads MKLCVTFLLVLVILPSVTG. A propeptide spanning residues 20–47 is cleaved from the precursor; sequence VKSSERTLSGAALRGDRGTCSGRGQECK. Cystine bridges form between cysteine 39/cysteine 53, cysteine 46/cysteine 58, cysteine 52/cysteine 63, and cysteine 57/cysteine 70.

Belongs to the I1 superfamily. Expressed by the venom duct.

Its subcellular location is the secreted. This Conus textile (Cloth-of-gold cone) protein is Conotoxin Tx11.3.